We begin with the raw amino-acid sequence, 240 residues long: 6-carboxyhexanoate--CoA ligase (240 aa).

Belongs to the BioW family. Homodimer. It depends on Mg(2+) as a cofactor.

The catalysed reaction is heptanedioate + ATP + CoA = 6-carboxyhexanoyl-CoA + AMP + diphosphate. Its pathway is metabolic intermediate metabolism; pimeloyl-CoA biosynthesis; pimeloyl-CoA from pimelate: step 1/1. Functionally, catalyzes the transformation of pimelate into pimeloyl-CoA with concomitant hydrolysis of ATP to AMP. This is 6-carboxyhexanoate--CoA ligase from Aquifex aeolicus (strain VF5).